The primary structure comprises 167 residues: Novel acetylcholine receptor chaperone (167 aa).

Residues Met-1–Arg-5 are Cytoplasmic-facing. A helical membrane pass occupies residues Thr-6–Ile-26. Topologically, residues Lys-27–Ser-61 are lumenal. Residues Ala-43 to Leu-54 are interaction with NGFR. The helical transmembrane segment at Ile-62–Val-82 threads the bilayer. Residues Pro-83 to Asp-88 lie on the Cytoplasmic side of the membrane. Residues Val-89–Gly-109 form a helical membrane-spanning segment. The Lumenal segment spans residues Asp-110–Arg-114. The chain crosses the membrane as a helical span at residues Tyr-115–Ala-132. Residues Arg-133 to Ser-167 lie on the Cytoplasmic side of the membrane. Basic and acidic residues predominate over residues Pro-135–Leu-145. The segment at Pro-135 to Ser-167 is disordered.

The protein belongs to the DoxX family. As to quaternary structure, may interact with NGFR. Interacts with RPN1, RPN2 and CANX. In terms of tissue distribution, brain (at protein level). Expressed in the spinal cord dorsal horn (at protein level).

The protein localises to the peroxisome membrane. Its subcellular location is the cytoplasmic vesicle. The protein resides in the endoplasmic reticulum membrane. Functionally, molecular chaperone which mediates the proper assembly and functional expression of the nicotinic acetylcholine receptors (nAChRs) throughout the brain. Essential for the proper folding, assembly, function and surface trafficking of alpha-7 (CHRNA7), alpha-4-beta-2, alpha-3-beta-2 and alpha-3-beta-4 receptors. Stably associates with ribophorin-1 (RPN1) and ribophorin-2 (RPN2) (components of the oligosaccharyl transferase (OST) complex) and with calnexin (CANX), both of which are critical for NACHO-mediated effects on CHRNA7 assembly and function. Facilitates the proper folding and assembly of alpha-6-beta-2 and alpha-6-beta-2-beta-3 receptors and acts at early stages of the nAChRs subunit assembly. Promotes the expression of the alpha-4(2):beta-2(3) stoichiometric form over the alpha-4(3):beta-2(2) form. This is Novel acetylcholine receptor chaperone from Mus musculus (Mouse).